The sequence spans 189 residues: UPF0301 protein CAB604 (189 aa).

Belongs to the UPF0301 (AlgH) family.

This Chlamydia abortus (strain DSM 27085 / S26/3) (Chlamydophila abortus) protein is UPF0301 protein CAB604.